Here is a 448-residue protein sequence, read N- to C-terminus: N-succinylarginine dihydrolase (448 aa).

Substrate contacts are provided by residues 19–28, N110, and 137–138; these read GGLSYGNVAS and HR. The active site involves E174. R214 provides a ligand contact to substrate. H250 is an active-site residue. Substrate is bound by residues D252 and N365. C371 serves as the catalytic Nucleophile.

It belongs to the succinylarginine dihydrolase family. As to quaternary structure, homodimer.

The enzyme catalyses N(2)-succinyl-L-arginine + 2 H2O + 2 H(+) = N(2)-succinyl-L-ornithine + 2 NH4(+) + CO2. It functions in the pathway amino-acid degradation; L-arginine degradation via AST pathway; L-glutamate and succinate from L-arginine: step 2/5. Catalyzes the hydrolysis of N(2)-succinylarginine into N(2)-succinylornithine, ammonia and CO(2). The polypeptide is N-succinylarginine dihydrolase (Pseudomonas paraeruginosa (strain DSM 24068 / PA7) (Pseudomonas aeruginosa (strain PA7))).